Here is a 362-residue protein sequence, read N- to C-terminus: Alpha-2-HS-glycoprotein (362 aa).

The N-terminal stretch at 1 to 15 is a signal peptide; that stretch reads LILFFCLAQLWGCRA. The region spanning 24–130 is the Cystatin fetuin-A-type 1 domain; that stretch reads YREPACDDVE…QFSVLFAKCD (107 aa). Cystine bridges form between Cys-29/Cys-353, Cys-86/Cys-97, Cys-111/Cys-129, Cys-143/Cys-146, Cys-205/Cys-216, and Cys-227/Cys-244. A glycan (N-linked (GlcNAc...) asparagine) is linked at Asn-96. Phosphoserine is present on residues Ser-131, Ser-132, and Ser-135. Positions 141–252 constitute a Cystatin fetuin-A-type 2 domain; sequence KVCPNCPLLA…TCTVFQTQPV (112 aa). Residues Asn-153 and Asn-173 are each glycosylated (N-linked (GlcNAc...) asparagine). 4 positions are modified to phosphoserine: Ser-314, Ser-318, Ser-321, and Ser-323. A glycan (O-linked (GalNAc...) threonine) is linked at Thr-332.

This sequence belongs to the fetuin family. In terms of processing, phosphorylated by FAM20C in the extracellular medium. As to expression, expressed by the liver and secreted in plasma.

Its subcellular location is the secreted. The sequence is that of Alpha-2-HS-glycoprotein (AHSG) from Sus scrofa (Pig).